The sequence spans 128 residues: Putative esterase aq_1494 (128 aa).

The active site involves aspartate 15.

Belongs to the 4-hydroxybenzoyl-CoA thioesterase family.

This Aquifex aeolicus (strain VF5) protein is Putative esterase aq_1494.